Here is a 197-residue protein sequence, read N- to C-terminus: Pinin homolog 1 (197 aa).

Residues Leu-30–Gly-73 form a disordered region. Composition is skewed to basic and acidic residues over residues Val-34–Ile-43 and Asp-53–Lys-71.

It belongs to the pinin family.

The protein localises to the nucleus. It localises to the cytoplasm. Its function is as follows. Transcriptional activator that may participate in the regulation of mRNA splicing. In Schizosaccharomyces pombe (strain 972 / ATCC 24843) (Fission yeast), this protein is Pinin homolog 1 (pnn1).